The chain runs to 362 residues: Methylthioribose-1-phosphate isomerase (362 aa).

Residues 49–51 (RGA), Arg89, and Gln201 contribute to the substrate site. The Proton donor role is filled by Asp242. 252 to 253 (NK) contacts substrate.

The protein belongs to the eIF-2B alpha/beta/delta subunits family. MtnA subfamily.

It carries out the reaction 5-(methylsulfanyl)-alpha-D-ribose 1-phosphate = 5-(methylsulfanyl)-D-ribulose 1-phosphate. It functions in the pathway amino-acid biosynthesis; L-methionine biosynthesis via salvage pathway; L-methionine from S-methyl-5-thio-alpha-D-ribose 1-phosphate: step 1/6. Functionally, catalyzes the interconversion of methylthioribose-1-phosphate (MTR-1-P) into methylthioribulose-1-phosphate (MTRu-1-P). The chain is Methylthioribose-1-phosphate isomerase from Leptospira borgpetersenii serovar Hardjo-bovis (strain JB197).